The primary structure comprises 252 residues: Thiazole synthase (252 aa).

The Schiff-base intermediate with DXP role is filled by Lys-98. Residues Gly-159, 185–186 (AG), and 207–208 (AT) contribute to the 1-deoxy-D-xylulose 5-phosphate site.

Belongs to the ThiG family. In terms of assembly, homotetramer. Forms heterodimers with either ThiH or ThiS.

The protein resides in the cytoplasm. The enzyme catalyses [ThiS sulfur-carrier protein]-C-terminal-Gly-aminoethanethioate + 2-iminoacetate + 1-deoxy-D-xylulose 5-phosphate = [ThiS sulfur-carrier protein]-C-terminal Gly-Gly + 2-[(2R,5Z)-2-carboxy-4-methylthiazol-5(2H)-ylidene]ethyl phosphate + 2 H2O + H(+). The protein operates within cofactor biosynthesis; thiamine diphosphate biosynthesis. In terms of biological role, catalyzes the rearrangement of 1-deoxy-D-xylulose 5-phosphate (DXP) to produce the thiazole phosphate moiety of thiamine. Sulfur is provided by the thiocarboxylate moiety of the carrier protein ThiS. In vitro, sulfur can be provided by H(2)S. The chain is Thiazole synthase from Mycolicibacterium smegmatis (strain ATCC 700084 / mc(2)155) (Mycobacterium smegmatis).